Reading from the N-terminus, the 74-residue chain is Defensin-like protein 39 (74 aa).

Residues 1 to 28 form the signal peptide; that stretch reads MEKKSLAALSFLLLLVLFVAQEIVVTEA. Intrachain disulfides connect Cys-31–Cys-74, Cys-42–Cys-63, Cys-48–Cys-68, and Cys-52–Cys-70.

The protein belongs to the DEFL family. Pods.

Its subcellular location is the secreted. Functionally, possesses antifungal activity. The chain is Defensin-like protein 39 (PI39) from Pisum sativum (Garden pea).